Reading from the N-terminus, the 156-residue chain is Transcriptional repressor NrdR (156 aa).

A zinc finger lies at 3-34 (CPFCGNVDTQVKDSRPAEDHVAIRRRRFCPAC). Residues 49-139 (LVVIKSNGKR…VYKNFQATGD (91 aa)) form the ATP-cone domain.

Belongs to the NrdR family. Requires Zn(2+) as cofactor.

Functionally, negatively regulates transcription of bacterial ribonucleotide reductase nrd genes and operons by binding to NrdR-boxes. The protein is Transcriptional repressor NrdR of Jannaschia sp. (strain CCS1).